Here is a 409-residue protein sequence, read N- to C-terminus: Endoglucanase B (409 aa).

The first 21 residues, 1 to 21 (MKLKRIAALLTAAVMSVGVMA), serve as a signal peptide directing secretion. Residues 23-66 (CGGSKSDDKSKADTKSAAETSGAEGDSSESEEIPVSQTHTNDPM) are disordered. Positions 27–38 (KSDDKSKADTKS) are enriched in basic and acidic residues. Polar residues predominate over residues 57–66 (VSQTHTNDPM). The active-site Proton donor is the glutamate 212. Glutamate 332 acts as the Nucleophile in catalysis.

It belongs to the glycosyl hydrolase 5 (cellulase A) family.

The catalysed reaction is Endohydrolysis of (1-&gt;4)-beta-D-glucosidic linkages in cellulose, lichenin and cereal beta-D-glucans.. The polypeptide is Endoglucanase B (celB) (Ruminococcus albus).